The sequence spans 136 residues: Ribosome-binding factor A (136 aa).

Belongs to the RbfA family. In terms of assembly, monomer. Binds 30S ribosomal subunits, but not 50S ribosomal subunits or 70S ribosomes.

It localises to the cytoplasm. One of several proteins that assist in the late maturation steps of the functional core of the 30S ribosomal subunit. Associates with free 30S ribosomal subunits (but not with 30S subunits that are part of 70S ribosomes or polysomes). Required for efficient processing of 16S rRNA. May interact with the 5'-terminal helix region of 16S rRNA. This Yersinia pestis bv. Antiqua (strain Antiqua) protein is Ribosome-binding factor A.